Here is a 343-residue protein sequence, read N- to C-terminus: Diterpene cyclase DtcycB (343 aa).

The Mg(2+) site is built by N219, S223, and E227.

The protein belongs to the terpene synthase family. In terms of assembly, homodimer. It depends on Mg(2+) as a cofactor.

The catalysed reaction is (2E,6E,10E)-geranylgeranyl diphosphate + H2O = (R)-nephthenol + diphosphate. It catalyses the reaction (2E,6E,10E)-geranylgeranyl diphosphate = (R)-cembrene A + diphosphate. It carries out the reaction (2E,6E,10E)-geranylgeranyl diphosphate + H2O = (1S,4E,8E,12E)-2,2,5,9,13-pentamethylcyclopentadeca-4,8,12-trien-1-ol + diphosphate. Diterpene cyclases that can form multiple diterpene products. This is Diterpene cyclase DtcycB from Streptomyces sp.